Here is a 257-residue protein sequence, read N- to C-terminus: Very long chain fatty acid elongase F (257 aa).

7 helical membrane passes run 10–30 (IPVV…LLFV), 55–75 (IFQI…LFVL), 98–118 (LICT…IFFV), 135–155 (FAMA…GVAF), 158–178 (CLLN…SSIS), 191–211 (ITIA…ITLA), and 221–241 (LTYG…QFYY).

It belongs to the ELO family. As to expression, highly expressed in females. Little or no expression detected in males.

It is found in the endoplasmic reticulum membrane. The enzyme catalyses a very-long-chain acyl-CoA + malonyl-CoA + H(+) = a very-long-chain 3-oxoacyl-CoA + CO2 + CoA. It participates in lipid metabolism; fatty acid biosynthesis. Its function is as follows. Condensing enzyme that elongates saturated and monounsaturated very long chain fatty acids, to yield products up to 30 carbons in length. May also elongate diunsaturated fatty acids. Important for courtship behavior where it probably has a role in female pheromone biosynthesis. The sequence is that of Very long chain fatty acid elongase F from Drosophila melanogaster (Fruit fly).